Reading from the N-terminus, the 369-residue chain is Ubiquinone biosynthesis protein COQ4, mitochondrial (369 aa).

Residues 1 to 28 (MTSILGSARPLIQVGPKSRNASTSMSRL) constitute a mitochondrion transit peptide. The tract at residues 1–70 (MTSILGSARP…NPTNASRHPR (70 aa)) is disordered. 2 stretches are compositionally biased toward polar residues: residues 19–33 (RNASTSMSRLPSFPT) and 47–66 (YATISPTAPRSSQRNPTNAS). Zn(2+)-binding residues include His198, Asp199, His202, and Glu214. A disordered region spans residues 330–369 (FSGRAKKGGKRRGWPSKILEHQKAQHQQQQQQQKVDESRN). Over residues 332–343 (GRAKKGGKRRGW) the composition is skewed to basic residues.

It belongs to the COQ4 family. As to quaternary structure, component of a multi-subunit COQ enzyme complex, composed of at least COQ3, COQ4, COQ5, COQ6, COQ7 and COQ9. Zn(2+) is required as a cofactor.

It is found in the mitochondrion inner membrane. The enzyme catalyses a 4-hydroxy-3-methoxy-5-(all-trans-polyprenyl)benzoate + H(+) = a 2-methoxy-6-(all-trans-polyprenyl)phenol + CO2. It participates in cofactor biosynthesis; ubiquinone biosynthesis. Functionally, lyase that catalyzes the C1-decarboxylation of 4-hydroxy-3-methoxy-5-(all-trans-polyprenyl)benzoic acid into 2-methoxy-6-(all-trans-polyprenyl)phenol during ubiquinone biosynthesis. The polypeptide is Ubiquinone biosynthesis protein COQ4, mitochondrial (Mycosarcoma maydis (Corn smut fungus)).